Reading from the N-terminus, the 419-residue chain is L-rhamnose isomerase (419 aa).

Mn(2+)-binding residues include H262, D294, and D296.

This sequence belongs to the rhamnose isomerase family. Homotetramer. Requires Mn(2+) as cofactor.

It is found in the cytoplasm. It catalyses the reaction L-rhamnopyranose = L-rhamnulose. The protein operates within carbohydrate degradation; L-rhamnose degradation; glycerone phosphate from L-rhamnose: step 1/3. Catalyzes the interconversion of L-rhamnose and L-rhamnulose. This Shigella flexneri protein is L-rhamnose isomerase.